Reading from the N-terminus, the 101-residue chain is Small ribosomal subunit protein uS14 (101 aa).

The protein belongs to the universal ribosomal protein uS14 family. Part of the 30S ribosomal subunit. Contacts proteins S3 and S10.

Functionally, binds 16S rRNA, required for the assembly of 30S particles and may also be responsible for determining the conformation of the 16S rRNA at the A site. This is Small ribosomal subunit protein uS14 from Paenarthrobacter aurescens (strain TC1).